The chain runs to 41 residues: Large ribosomal subunit protein bL36 (41 aa).

Belongs to the bacterial ribosomal protein bL36 family.

The polypeptide is Large ribosomal subunit protein bL36 (rpmJ) (Agrobacterium fabrum (strain C58 / ATCC 33970) (Agrobacterium tumefaciens (strain C58))).